We begin with the raw amino-acid sequence, 384 residues long: MAP kinase-activated protein kinase 3 (384 aa).

N-acetylmethionine is present on Met1. The interval 1–33 (MDGETAGEKGSLVPPPGALGGSALGGAPAPGVR) is disordered. Residues 46–306 (QLSKQVLGLG…IMQFMNHPWI (261 aa)) enclose the Protein kinase domain. ATP-binding positions include 52 to 60 (LGLGVNGKV) and Lys75. Asp168 (proton acceptor) is an active-site residue. Thr203 is subject to Phosphothreonine; by MAPK14. The residue at position 253 (Ser253) is a Phosphoserine; by MAPK14. Ser309 is modified (phosphoserine; by autocatalysis). Residues 309–345 (SMVVPQTPLYTARVLQEDKDHWDDVKEEMTSALATMR) form an autoinhibitory helix region. A Phosphothreonine; by MAPK14 modification is found at Thr315. A Nuclear export signal (NES) motif is present at residues 337–346 (MTSALATMRV). The segment at 347–371 (DYDQVKIKDLKTSNNRLLNKRRKKQ) is p38 MAPK-binding site. 2 short sequence motifs (bipartite nuclear localization signal) span residues 352 to 355 (KIKD) and 366 to 370 (KRRKK). A disordered region spans residues 359-384 (SNNRLLNKRRKKQAGSSSASQGCNNQ). A compositionally biased stretch (polar residues) spans 372-384 (AGSSSASQGCNNQ).

It belongs to the protein kinase superfamily. CAMK Ser/Thr protein kinase family. Heterodimer with p38-alpha/MAPK14. The heterodimer with p38-alpha/MAPK14 forms a stable complex: molecules are positioned 'face to face' so that the ATP-binding sites of both kinases are at the heterodimer interface. Interacts with TCF3 and with polycomb proteins, such as PCH2 and BMI1/PCGF4. In terms of processing, phosphorylated and activated by MAPK1/ERK2 and MAPK3/ERK1. Phosphorylated and activated by MAP kinase p38-alpha/MAPK14 at Thr-201, Ser-251 and Thr-313. Isoform 3 is degraded following phosphorylation at Thr-203. Ubiquitously expressed (at protein level). Isoform 3 is expressed in skeletal muscles and heart.

The protein resides in the nucleus. Its subcellular location is the cytoplasm. It catalyses the reaction L-seryl-[protein] + ATP = O-phospho-L-seryl-[protein] + ADP + H(+). It carries out the reaction L-threonyl-[protein] + ATP = O-phospho-L-threonyl-[protein] + ADP + H(+). With respect to regulation, activated following phosphorylation by p38-alpha/MAPK14 following various stresses. Inhibited by ligand 5B (2'-[2-(1,3-benzodioxol-5-yl)pyrimidin-4-yl]-5',6'-dihydrospiro[piperidine-4,7'-pyrrolo[3,2-c]pyridin]- 4'(1'h)-one) and ligand P4O (2-[2-(2-fluorophenyl)pyridin-4-yl]-1,5,6,7-tetrahydro- 4h-pyrrolo[3,2-c]pyridin-4-one), 2 ATP-competitive inhibitors. Stress-activated serine/threonine-protein kinase involved in cytokines production, endocytosis, cell migration, chromatin remodeling and transcriptional regulation. Following stress, it is phosphorylated and activated by MAP kinase p38-alpha/MAPK14, leading to phosphorylation of substrates. Phosphorylates serine in the peptide sequence, Hyd-X-R-X(2)-S, where Hyd is a large hydrophobic residue. MAPKAPK2 and MAPKAPK3, share the same function and substrate specificity, but MAPKAPK3 kinase activity and level in protein expression are lower compared to MAPKAPK2. Phosphorylates HSP27/HSPB1, KRT18, KRT20, RCSD1, RPS6KA3, TAB3 and TTP/ZFP36. Mediates phosphorylation of HSP27/HSPB1 in response to stress, leading to dissociate HSP27/HSPB1 from large small heat-shock protein (sHsps) oligomers and impair their chaperone activities and ability to protect against oxidative stress effectively. Involved in inflammatory response by regulating tumor necrosis factor (TNF) and IL6 production post-transcriptionally: acts by phosphorylating AU-rich elements (AREs)-binding proteins, such as TTP/ZFP36, leading to regulate the stability and translation of TNF and IL6 mRNAs. Phosphorylation of TTP/ZFP36, a major post-transcriptional regulator of TNF, promotes its binding to 14-3-3 proteins and reduces its ARE mRNA affinity leading to inhibition of dependent degradation of ARE-containing transcript. Involved in toll-like receptor signaling pathway (TLR) in dendritic cells: required for acute TLR-induced macropinocytosis by phosphorylating and activating RPS6KA3. Also acts as a modulator of Polycomb-mediated repression. This chain is MAP kinase-activated protein kinase 3 (Mapkapk3), found in Mus musculus (Mouse).